We begin with the raw amino-acid sequence, 183 residues long: Acireductone dioxygenase (183 aa).

Positions 95, 97, 101, and 139 each coordinate Fe(2+). Ni(2+) is bound by residues His95, His97, Glu101, and His139.

This sequence belongs to the acireductone dioxygenase (ARD) family. In terms of assembly, monomer. It depends on Fe(2+) as a cofactor. The cofactor is Ni(2+).

It catalyses the reaction 1,2-dihydroxy-5-(methylsulfanyl)pent-1-en-3-one + O2 = 3-(methylsulfanyl)propanoate + CO + formate + 2 H(+). The enzyme catalyses 1,2-dihydroxy-5-(methylsulfanyl)pent-1-en-3-one + O2 = 4-methylsulfanyl-2-oxobutanoate + formate + 2 H(+). Its pathway is amino-acid biosynthesis; L-methionine biosynthesis via salvage pathway; L-methionine from S-methyl-5-thio-alpha-D-ribose 1-phosphate: step 5/6. Its function is as follows. Catalyzes 2 different reactions between oxygen and the acireductone 1,2-dihydroxy-3-keto-5-methylthiopentene (DHK-MTPene) depending upon the metal bound in the active site. Fe-containing acireductone dioxygenase (Fe-ARD) produces formate and 2-keto-4-methylthiobutyrate (KMTB), the alpha-ketoacid precursor of methionine in the methionine recycle pathway. Ni-containing acireductone dioxygenase (Ni-ARD) produces methylthiopropionate, carbon monoxide and formate, and does not lie on the methionine recycle pathway. This chain is Acireductone dioxygenase, found in Aquifex aeolicus (strain VF5).